The sequence spans 260 residues: MSTFKRELELFLLALTFFTRIPVPVKLDYSGEGLNRASRYFGLVGTLVGLIAALVFYLTQFIFPASVAVVLAMIATVLLTGGFHEDGLADTADGFGGAFERERKLEIMKDSRVGSYGSLALMLALLLKFQLLSELALYSVSSVAGGLVLGHTLSRAFAASIIFNHTYVREDAESKAKPLAQSMHWDEVLFLVLSAGVICLLLTGVGATLVILVTLFVARSLLARWQSRHIGGYTGDTLGACQQILELVVYLVLLLLWSQS.

6 consecutive transmembrane segments (helical) span residues Leu-43–Phe-63, Pro-64–His-84, Gly-117–Leu-137, Val-143–Phe-163, Val-197–Val-217, and Thr-237–Trp-257.

Belongs to the CobS family. Requires Mg(2+) as cofactor.

It is found in the cell inner membrane. It catalyses the reaction alpha-ribazole + adenosylcob(III)inamide-GDP = adenosylcob(III)alamin + GMP + H(+). It carries out the reaction alpha-ribazole 5'-phosphate + adenosylcob(III)inamide-GDP = adenosylcob(III)alamin 5'-phosphate + GMP + H(+). Its pathway is cofactor biosynthesis; adenosylcobalamin biosynthesis; adenosylcobalamin from cob(II)yrinate a,c-diamide: step 7/7. Its function is as follows. Joins adenosylcobinamide-GDP and alpha-ribazole to generate adenosylcobalamin (Ado-cobalamin). Also synthesizes adenosylcobalamin 5'-phosphate from adenosylcobinamide-GDP and alpha-ribazole 5'-phosphate. This chain is Adenosylcobinamide-GDP ribazoletransferase, found in Shewanella amazonensis (strain ATCC BAA-1098 / SB2B).